Here is a 668-residue protein sequence, read N- to C-terminus: MDISEEKKRRIHELIEELNKYAYEYYVLDNPTVSDKEYDKRYDELVNLEKETGFVLSYSPTQRVGDTVLTQFDKYTHKSRLWSLDKAQNIEQLKEWINRNEKIIMEYNRLNEETLPMPTYILTKKFDGLTVNCTYDESGILVKGATRGTGIIGEDITSQVKTIKCLPLRIANNNLIEVRGEAIMTKEAFDKYNEKAEIPLKNLRNGAAGALRNLDVRETAKRNLSAFFYDIGYSEGNEFKTYMEMIGFLISMGFPVDPYIKECKDIVEIKDEIKYIEDIRNELNYDIDGIVIAINHIKTREVLGYTVKFPRWAIAYKFEAEEATTKLIDVEWNVGRSGRVTPTALLESVELGGATIKRATLNNMDDIIRKKVRLGAEVFIRRSNDVIPEIMGVVESSLENTEEIKAPLKCPYCESKLINEGVHLFCENTLSCKPQLVKSLVHFASREAMNIEGFSEKTAEQFYEELNIKSIGDLYRVKKEDLLTLDKFKEKKADNIMNAIENSKKPKLSSFIYALSIPNVGVKTARDLVKSFKTLDNIKNATIEELTSVKDIGEIVANSVIEFFKQENINESIKELLELGVTPIMDITEIKKDNKFNGKTIVVTGTLEGYTRNEIKEKLEALGAKVSGSVSKKTDFVLAGEEAGSKYNKAMELGIRIITEEEFNEMIN.

NAD(+) is bound by residues 35-39 and 83-84; these read DKEYD and SL. Lys125 serves as the catalytic N6-AMP-lysine intermediate. Residues Arg147, Glu181, and Lys317 each contribute to the NAD(+) site. Residues Cys410, Cys413, Cys426, and Cys432 each contribute to the Zn(2+) site. Residues 591–668 enclose the BRCT domain; sequence KKDNKFNGKT…TEEEFNEMIN (78 aa).

The protein belongs to the NAD-dependent DNA ligase family. LigA subfamily. It depends on Mg(2+) as a cofactor. Mn(2+) serves as cofactor.

The enzyme catalyses NAD(+) + (deoxyribonucleotide)n-3'-hydroxyl + 5'-phospho-(deoxyribonucleotide)m = (deoxyribonucleotide)n+m + AMP + beta-nicotinamide D-nucleotide.. Functionally, DNA ligase that catalyzes the formation of phosphodiester linkages between 5'-phosphoryl and 3'-hydroxyl groups in double-stranded DNA using NAD as a coenzyme and as the energy source for the reaction. It is essential for DNA replication and repair of damaged DNA. This Clostridium tetani (strain Massachusetts / E88) protein is DNA ligase.